The following is a 279-amino-acid chain: Urease accessory protein UreD (279 aa).

Belongs to the UreD family. In terms of assembly, ureD, UreF and UreG form a complex that acts as a GTP-hydrolysis-dependent molecular chaperone, activating the urease apoprotein by helping to assemble the nickel containing metallocenter of UreC. The UreE protein probably delivers the nickel.

Its subcellular location is the cytoplasm. In terms of biological role, required for maturation of urease via the functional incorporation of the urease nickel metallocenter. The protein is Urease accessory protein UreD of Rhodopseudomonas palustris (strain ATCC BAA-98 / CGA009).